Consider the following 1409-residue polypeptide: Copia protein (1409 aa).

The CCHC-type zinc-finger motif lies at 230–247; it reads VKCHHCGREGHIKKDCFH. The For protease activity role is filled by Asp292. One can recognise an Integrase catalytic domain in the interval 476–644; that stretch reads HIKRPLFVVH…TPYEMWHNKK (169 aa). Disordered stretches follow at residues 760 to 780 and 805 to 851; these read SKESENKNFPNDSRKIIQTEF and NESK…NDGI. A compositionally biased stretch (basic and acidic residues) spans 827–841; that stretch reads ESRESETAEHLKEIG.

The chain is Copia protein (GIP) from Drosophila melanogaster (Fruit fly).